An 864-amino-acid polypeptide reads, in one-letter code: Mitochondrial 15S rRNA processing factor CCM1 (864 aa).

The transit peptide at 1–76 (MYMARCGPKN…REFSNTLKER (76 aa)) directs the protein to the mitochondrion. PPR repeat units lie at residues 319 to 353 (NKQN…STKH) and 356 to 390 (DICT…NIKP).

Belongs to the CCM1 family. As to quaternary structure, binds to mitochondrial small subunit 15S rRNA.

The protein resides in the mitochondrion. In terms of biological role, regulates mitochondrial small subunit maturation by controlling 15S rRNA 5'-end processing. Localizes to the 5' precursor of the 15S rRNA in a position that is subsequently occupied by mS47 in the mature yeast mtSSU. Uses structure and sequence-specific RNA recognition, binding to a single-stranded region of the precursor and specifically recognizing bases -6 to -1. The exchange of Ccm1 for mS47 is coupled to the irreversible removal of precursor rRNA that is accompanied by conformational changes of the mitoribosomal proteins uS5m and mS26. These conformational changes signal completion of 5'-end rRNA processing through protection of the mature 5'-end of the 15S rRNA and stabilization of mS47. The removal of the 5' precursor together with the dissociation of Ccm1 may be catalyzed by the 5'-3' exoribonuclease Pet127. Involved in the specific removal of group I introns in mitochondrial encoded transcripts. This is Mitochondrial 15S rRNA processing factor CCM1 (CCM1) from Saccharomyces cerevisiae (strain YJM789) (Baker's yeast).